The following is a 336-amino-acid chain: tRNA N6-adenosine threonylcarbamoyltransferase (336 aa).

2 residues coordinate Fe cation: His112 and His116. Substrate-binding positions include 136-140 (LVSGG), Asp169, Gly182, and Asn276. Fe cation is bound at residue Asp304.

It belongs to the KAE1 / TsaD family. It depends on Fe(2+) as a cofactor.

The protein resides in the cytoplasm. It carries out the reaction L-threonylcarbamoyladenylate + adenosine(37) in tRNA = N(6)-L-threonylcarbamoyladenosine(37) in tRNA + AMP + H(+). Required for the formation of a threonylcarbamoyl group on adenosine at position 37 (t(6)A37) in tRNAs that read codons beginning with adenine. Is involved in the transfer of the threonylcarbamoyl moiety of threonylcarbamoyl-AMP (TC-AMP) to the N6 group of A37, together with TsaE and TsaB. TsaD likely plays a direct catalytic role in this reaction. This chain is tRNA N6-adenosine threonylcarbamoyltransferase, found in Francisella tularensis subsp. holarctica (strain LVS).